The following is a 433-amino-acid chain: Serine--tRNA ligase (433 aa).

Position 235-237 (235-237 (TSE)) interacts with L-serine. 266–268 (RSE) provides a ligand contact to ATP. Glu-289 lines the L-serine pocket. 353–356 (EISS) provides a ligand contact to ATP. Ser-388 provides a ligand contact to L-serine.

Belongs to the class-II aminoacyl-tRNA synthetase family. Type-1 seryl-tRNA synthetase subfamily. As to quaternary structure, homodimer. The tRNA molecule binds across the dimer.

The protein localises to the cytoplasm. The enzyme catalyses tRNA(Ser) + L-serine + ATP = L-seryl-tRNA(Ser) + AMP + diphosphate + H(+). The catalysed reaction is tRNA(Sec) + L-serine + ATP = L-seryl-tRNA(Sec) + AMP + diphosphate + H(+). Its pathway is aminoacyl-tRNA biosynthesis; selenocysteinyl-tRNA(Sec) biosynthesis; L-seryl-tRNA(Sec) from L-serine and tRNA(Sec): step 1/1. Functionally, catalyzes the attachment of serine to tRNA(Ser). Is also able to aminoacylate tRNA(Sec) with serine, to form the misacylated tRNA L-seryl-tRNA(Sec), which will be further converted into selenocysteinyl-tRNA(Sec). The chain is Serine--tRNA ligase from Burkholderia cepacia (Pseudomonas cepacia).